The sequence spans 399 residues: Nicotinate phosphoribosyltransferase (399 aa).

His-221 is modified (phosphohistidine; by autocatalysis).

It belongs to the NAPRTase family. Post-translationally, transiently phosphorylated on a His residue during the reaction cycle. Phosphorylation strongly increases the affinity for substrates and increases the rate of nicotinate D-ribonucleotide production. Dephosphorylation regenerates the low-affinity form of the enzyme, leading to product release.

The catalysed reaction is nicotinate + 5-phospho-alpha-D-ribose 1-diphosphate + ATP + H2O = nicotinate beta-D-ribonucleotide + ADP + phosphate + diphosphate. It functions in the pathway cofactor biosynthesis; NAD(+) biosynthesis; nicotinate D-ribonucleotide from nicotinate: step 1/1. Catalyzes the synthesis of beta-nicotinate D-ribonucleotide from nicotinate and 5-phospho-D-ribose 1-phosphate at the expense of ATP. In Buchnera aphidicola subsp. Acyrthosiphon pisum (strain 5A), this protein is Nicotinate phosphoribosyltransferase.